Consider the following 490-residue polypeptide: Interferon-induced protein with tetratricopeptide repeats 3 (490 aa).

TPR repeat units lie at residues 51–84, 94–127, 136–169, 172–206, 207–240, 241–274, 415–448, and 450–481; these read ATMY…IQQE, LVTW…CKKF, SELD…KPNN, FSSG…SPDN, QYVK…SPCQ, TDVL…TPNN, PNYW…LLRD, and PSGI…SPRE. Phosphoserine is present on residues serine 203 and serine 237. The tract at residues 467–490 is disordered; it reads SEEMGQGAVSSSPRELLSNSEQLN. Positions 474 to 490 are enriched in polar residues; sequence AVSSSPRELLSNSEQLN. Residue serine 478 is modified to Phosphoserine.

This sequence belongs to the IFIT family. As to quaternary structure, component of an interferon-dependent multiprotein complex, at least composed of IFIT1, IFIT2 and IFIT3. Interacts with IFIT1 and IFIT2. Interacts (via N-terminus) with MAVS, TBK1, TRAF6 and RIGI. Interacts with COPS5. In terms of tissue distribution, expression significantly higher in peripheral blood mononuclear cells (PBMCs) and monocytes from systemic lupus erythematosus (SLE) patients than in those from healthy individuals (at protein level). Spleen, lung, leukocytes, lymph nodes, placenta, bone marrow and fetal liver.

Its subcellular location is the cytoplasm. It is found in the mitochondrion. Functionally, IFN-induced antiviral protein which acts as an inhibitor of cellular as well as viral processes, cell migration, proliferation, signaling, and viral replication. Enhances MAVS-mediated host antiviral responses by serving as an adapter bridging TBK1 to MAVS which leads to the activation of TBK1 and phosphorylation of IRF3 and phosphorylated IRF3 translocates into nucleus to promote antiviral gene transcription. Exhibits an antiproliferative activity via the up-regulation of cell cycle negative regulators CDKN1A/p21 and CDKN1B/p27. Normally, CDKN1B/p27 turnover is regulated by COPS5, which binds CDKN1B/p27 in the nucleus and exports it to the cytoplasm for ubiquitin-dependent degradation. IFIT3 sequesters COPS5 in the cytoplasm, thereby increasing nuclear CDKN1B/p27 protein levels. Up-regulates CDKN1A/p21 by down-regulating MYC, a repressor of CDKN1A/p21. Can negatively regulate the apoptotic effects of IFIT2. This chain is Interferon-induced protein with tetratricopeptide repeats 3 (IFIT3), found in Homo sapiens (Human).